Reading from the N-terminus, the 474-residue chain is ATP synthase subunit beta (474 aa).

158 to 165 (GGAGVGKT) contributes to the ATP binding site.

This sequence belongs to the ATPase alpha/beta chains family. F-type ATPases have 2 components, CF(1) - the catalytic core - and CF(0) - the membrane proton channel. CF(1) has five subunits: alpha(3), beta(3), gamma(1), delta(1), epsilon(1). CF(0) has three main subunits: a(1), b(2) and c(9-12). The alpha and beta chains form an alternating ring which encloses part of the gamma chain. CF(1) is attached to CF(0) by a central stalk formed by the gamma and epsilon chains, while a peripheral stalk is formed by the delta and b chains.

It is found in the cell membrane. It carries out the reaction ATP + H2O + 4 H(+)(in) = ADP + phosphate + 5 H(+)(out). Produces ATP from ADP in the presence of a proton gradient across the membrane. The catalytic sites are hosted primarily by the beta subunits. The chain is ATP synthase subunit beta from Tropheryma whipplei (strain Twist) (Whipple's bacillus).